The primary structure comprises 4760 residues: Nonribosomal peptide synthetase cm3A (4760 aa).

The span at 1-12 (MKHLASSENMPT) shows a compositional bias: polar residues. A disordered region spans residues 1 to 24 (MKHLASSENMPTPAQDRAPSPSAM). The region spanning 19–95 (PSPSAMQQEI…ELSRSAECQL (77 aa)) is the Carrier 1 domain. The residue at position 56 (S56) is an O-(pantetheine 4'-phosphoryl)serine. Condensation regions lie at residues 142–570 (QDIF…EIEQ) and 178–571 (PGLS…IEQL). Residues 591-984 (DEQARLCPDA…GRRDTQVKLR (394 aa)) are adenylation 1. In terms of domain architecture, Carrier 2 spans 1120-1197 (REATTLQLQI…KLTEKLGVPE (78 aa)). O-(pantetheine 4'-phosphoryl)serine is present on S1158. Condensation stretches follow at residues 1210 to 1654 (FPLS…KTPS) and 1689 to 2125 (VEDM…NVTT). Residues 2171–2551 (DGDLTYFELD…DRKDWQIKIR (381 aa)) are adenylation 2. The Carrier 3 domain maps to 2684-2762 (LPSSETEKTV…ELAHAIDQRS (79 aa)). At S2721 the chain carries O-(pantetheine 4'-phosphoryl)serine. Positions 2811–3203 (VEDIYPCTPL…RFKHIFGQLS (393 aa)) are condensation 4. Residues 3255–3647 (SATTPDRPAV…GRADQQLKIR (393 aa)) form an adenylation 3 region. The Carrier 4 domain occupies 3783-3857 (TRTEELMQSV…QLAQRATTDA (75 aa)). Condensation stretches follow at residues 3869–4296 (EFRL…TLLC) and 4340–4757 (EDIY…EEMG).

Belongs to the nrps family.

Its pathway is secondary metabolite biosynthesis. Nonribosomal peptide synthetase; part of the gene cluster that mediates the biosynthesis of beauveriolides I and III, cyclodepsipeptides acting as inhibitors of the acyl-CoA:cholesterol acyltransferase. The HR-PKS cm3B initiates the biosynthesis of beauveriolides by iteratively catalyzing the formation of the linear polyketide chain. The ATP-dependent acetyl-CoA ligase cm3D converts the polyketide carboxylic acid to a CoA thioester which id shuttled to the first T domain in the NRPS cm3A by the acetyltransferase cm3C. Cm3A contains 13 domains and assembles the polyketide chain, L-phenylalanine, L-alanine, and D-leucine (or D-allo-isoleucine) to form beauveriolide I (or beauveriolide III). The production of both beauveriolides I and III suggests the substrate adaptability of cm3B, using different amino acids as substrates. The chain is Nonribosomal peptide synthetase cm3A from Cordyceps militaris (strain CM01) (Caterpillar fungus).